Here is a 205-residue protein sequence, read N- to C-terminus: Guanylate kinase (205 aa).

One can recognise a Guanylate kinase-like domain in the interval 18–196 (PKLFTISAPA…AYQVLRSIFI (179 aa)). An ATP-binding site is contributed by 25 to 32 (APAGAGKT).

Belongs to the guanylate kinase family.

Its subcellular location is the cytoplasm. It carries out the reaction GMP + ATP = GDP + ADP. In terms of biological role, essential for recycling GMP and indirectly, cGMP. This chain is Guanylate kinase (gmk), found in Chlamydia muridarum (strain MoPn / Nigg).